The following is a 273-amino-acid chain: Glutamate 5-kinase (273 aa).

ATP is bound at residue lysine 15. Residues serine 55, aspartate 142, and asparagine 158 each contribute to the substrate site. ATP is bound by residues 178-179 and 220-226; these read SD and TGGMLSK.

Belongs to the glutamate 5-kinase family.

The protein localises to the cytoplasm. The enzyme catalyses L-glutamate + ATP = L-glutamyl 5-phosphate + ADP. It functions in the pathway amino-acid biosynthesis; L-proline biosynthesis; L-glutamate 5-semialdehyde from L-glutamate: step 1/2. In terms of biological role, catalyzes the transfer of a phosphate group to glutamate to form L-glutamate 5-phosphate. The sequence is that of Glutamate 5-kinase from Streptococcus pyogenes serotype M4 (strain MGAS10750).